Reading from the N-terminus, the 170-residue chain is Adenine phosphoribosyltransferase (170 aa).

The protein belongs to the purine/pyrimidine phosphoribosyltransferase family. As to quaternary structure, homodimer.

It localises to the cytoplasm. It catalyses the reaction AMP + diphosphate = 5-phospho-alpha-D-ribose 1-diphosphate + adenine. Its pathway is purine metabolism; AMP biosynthesis via salvage pathway; AMP from adenine: step 1/1. Its function is as follows. Catalyzes a salvage reaction resulting in the formation of AMP, that is energically less costly than de novo synthesis. The polypeptide is Adenine phosphoribosyltransferase (Acaryochloris marina (strain MBIC 11017)).